We begin with the raw amino-acid sequence, 254 residues long: Nickel import ATP-binding protein NikD (254 aa).

The ABC transporter domain maps to 2–241 (PQQIELRNIT…PKHTVTRSLV (240 aa)). 36–43 (GGSGSGKS) contributes to the ATP binding site.

It belongs to the ABC transporter superfamily. Nickel importer (TC 3.A.1.5.3) family. In terms of assembly, the complex is composed of two ATP-binding proteins (NikD and NikE), two transmembrane proteins (NikB and NikC) and a solute-binding protein (NikA).

It localises to the cell inner membrane. The catalysed reaction is Ni(2+)(out) + ATP + H2O = Ni(2+)(in) + ADP + phosphate + H(+). In terms of biological role, part of the ABC transporter complex NikABCDE involved in nickel import. Responsible for energy coupling to the transport system. This Shigella flexneri protein is Nickel import ATP-binding protein NikD.